The primary structure comprises 337 residues: Ribosomal RNA small subunit methyltransferase H (337 aa).

Residues 45-47 (GGH), aspartate 64, phenylalanine 91, aspartate 120, and glutamine 127 contribute to the S-adenosyl-L-methionine site.

It belongs to the methyltransferase superfamily. RsmH family.

It localises to the cytoplasm. The catalysed reaction is cytidine(1402) in 16S rRNA + S-adenosyl-L-methionine = N(4)-methylcytidine(1402) in 16S rRNA + S-adenosyl-L-homocysteine + H(+). Its function is as follows. Specifically methylates the N4 position of cytidine in position 1402 (C1402) of 16S rRNA. The polypeptide is Ribosomal RNA small subunit methyltransferase H (Corynebacterium glutamicum (strain R)).